The primary structure comprises 423 residues: CinA-like protein (423 aa).

This sequence belongs to the CinA family.

The protein is CinA-like protein of Chlorobium chlorochromatii (strain CaD3).